A 306-amino-acid polypeptide reads, in one-letter code: Porphobilinogen deaminase (306 aa).

Position 241 is an S-(dipyrrolylmethanemethyl)cysteine (Cys241).

It belongs to the HMBS family. As to quaternary structure, monomer. Dipyrromethane serves as cofactor.

The enzyme catalyses 4 porphobilinogen + H2O = hydroxymethylbilane + 4 NH4(+). It functions in the pathway porphyrin-containing compound metabolism; protoporphyrin-IX biosynthesis; coproporphyrinogen-III from 5-aminolevulinate: step 2/4. Its function is as follows. Tetrapolymerization of the monopyrrole PBG into the hydroxymethylbilane pre-uroporphyrinogen in several discrete steps. This is Porphobilinogen deaminase from Acidithiobacillus ferrooxidans (strain ATCC 23270 / DSM 14882 / CIP 104768 / NCIMB 8455) (Ferrobacillus ferrooxidans (strain ATCC 23270)).